Consider the following 314-residue polypeptide: MRPLTIIGPTGTGKSDLAIEIADRLSGKIAVEIVNADAYQLYRGMDIGTGKVPLAQRRGIPHHQLDVLDVTETATVAGYQRSAAADIEAIASRGALPLLVGGSMLYVQSLLDDWAFPAKDPAIRARWERRLAQVGPARLHAELVRRDPAAAAVIPLNDARRTVRALEVVEITGRPYAASAPRIGSPRWDSAIIGLDCETKVLDERLAARTKAMFDRGLIEEVISLLPCGLARGVTASRALGYAQVMEALKAGADTQALDSARQQTCLATRRYVRRQRSWFRRDRRVRWLDATVSTAAHRTAIIEAVLGAWRRAS.

ATP is bound at residue 8–15 (GPTGTGKS). Residue 10 to 15 (TGTGKS) coordinates substrate.

The protein belongs to the IPP transferase family. As to quaternary structure, monomer. It depends on Mg(2+) as a cofactor.

It carries out the reaction adenosine(37) in tRNA + dimethylallyl diphosphate = N(6)-dimethylallyladenosine(37) in tRNA + diphosphate. In terms of biological role, catalyzes the transfer of a dimethylallyl group onto the adenine at position 37 in tRNAs that read codons beginning with uridine, leading to the formation of N6-(dimethylallyl)adenosine (i(6)A). This Mycobacterium marinum (strain ATCC BAA-535 / M) protein is tRNA dimethylallyltransferase 1.